Consider the following 313-residue polypeptide: Pyrimidine-specific ribonucleoside hydrolase RihB (313 aa).

Asp11 serves as the catalytic Proton acceptor. Residues Asp11, Asp16, and Val124 each contribute to the Ca(2+) site. Residues Gln227 and His239 each coordinate substrate. Asp240 contacts Ca(2+).

This sequence belongs to the IUNH family. RihB subfamily. Homotetramer. Ca(2+) serves as cofactor.

The catalysed reaction is a pyrimidine ribonucleoside + H2O = a pyrimidine nucleobase + D-ribose. Functionally, hydrolyzes cytidine or uridine to ribose and cytosine or uracil, respectively. Has a clear preference for cytidine over uridine. Strictly specific for ribonucleosides. The chain is Pyrimidine-specific ribonucleoside hydrolase RihB from Escherichia coli O9:H4 (strain HS).